Here is a 227-residue protein sequence, read N- to C-terminus: MIQEELVQIQELNEEIGRLLIEIARKSIKEEFKLDKLDLSKYDNPILDKKGLAFVTLEKIAYNTSSLRGCIGYVEAVAPLKQIAASAAKAAAFSDPRFNPLQEDELANIIIEVTVLTKPEEIKVKDRWDLPKIIKVGEDGLIVEKGILHSGLLLPQVPMEYCWDEETFLAETCIKASLEPDCWLDSSVRIKRFHGIIFKETKPNGSDIIVIKPSDIKCKLNELINNL.

Residues 15–209 (EIGRLLIEIA…ETKPNGSDII (195 aa)) form the AMMECR1 domain.

This is Protein SSO0193 from Saccharolobus solfataricus (strain ATCC 35092 / DSM 1617 / JCM 11322 / P2) (Sulfolobus solfataricus).